We begin with the raw amino-acid sequence, 126 residues long: MARVKNTPVTRRRRKKILKLAKGYFGSKSTLYRTAHEQVMRALQYAYRDRKQNKRNFRRLWISRINAGAVQNGFKYSKLIHGLSLANVQLNRKVLADLAISEPTVFASYVELAKDAIANPAKYQVK.

This sequence belongs to the bacterial ribosomal protein bL20 family.

Its function is as follows. Binds directly to 23S ribosomal RNA and is necessary for the in vitro assembly process of the 50S ribosomal subunit. It is not involved in the protein synthesizing functions of that subunit. This is Large ribosomal subunit protein bL20 from Acholeplasma laidlawii (strain PG-8A).